Consider the following 62-residue polypeptide: Photosystem II reaction center protein K (62 aa).

The propeptide occupies 1–25; that stretch reads MPNILSLTCICFNSVLYPTTSFFFA. The helical transmembrane segment at 33-53 threads the bilayer; the sequence is IFNPIVDVMPVIPLFFFLLAF.

This sequence belongs to the PsbK family. As to quaternary structure, PSII is composed of 1 copy each of membrane proteins PsbA, PsbB, PsbC, PsbD, PsbE, PsbF, PsbH, PsbI, PsbJ, PsbK, PsbL, PsbM, PsbT, PsbX, PsbY, PsbZ, Psb30/Ycf12, at least 3 peripheral proteins of the oxygen-evolving complex and a large number of cofactors. It forms dimeric complexes.

The protein localises to the plastid. It is found in the chloroplast thylakoid membrane. In terms of biological role, one of the components of the core complex of photosystem II (PSII). PSII is a light-driven water:plastoquinone oxidoreductase that uses light energy to abstract electrons from H(2)O, generating O(2) and a proton gradient subsequently used for ATP formation. It consists of a core antenna complex that captures photons, and an electron transfer chain that converts photonic excitation into a charge separation. The protein is Photosystem II reaction center protein K of Agrostis stolonifera (Creeping bentgrass).